Here is a 672-residue protein sequence, read N- to C-terminus: Transmembrane 9 superfamily member 2 (672 aa).

Residues 1 to 18 (MKRGVWLLIYCYATLTKG) form the signal peptide. At 19 to 307 (FSLPGLSPTT…DKYLHIYDPQ (289 aa)) the chain is on the extracellular side. Residues 308 to 328 (IQWFSLINFSVIVILLSSVVM) form a helical membrane-spanning segment. Topologically, residues 329-383 (HSLLRALKSDLARYNELNLDNEFHEDSGWKLGHGDVFRTPSKSMLLSILVGSGMQ) are cytoplasmic. The chain crosses the membrane as a helical span at residues 384–404 (LFLMVMCSIFFAAVGLVSPVS). Residues 405-410 (RGSLPT) are Extracellular-facing. The chain crosses the membrane as a helical span at residues 411-431 (VMFVLYALFGFVGSYASMGVY). Residues 432 to 447 (KFFRGPYWKANMILTP) lie on the Cytoplasmic side of the membrane. Residues 448 to 468 (ILLPGAIFLLIVIMNFFLLFA) form a helical membrane-spanning segment. Topologically, residues 469–479 (HSSGVIPARSL) are extracellular. The chain crosses the membrane as a helical span at residues 480 to 500 (FFIILLWFLVSVPLSFAGSIV). At 501-532 (AHKQCNWDEHPTKTNQIARQIPYQPWYLRTAQ) the chain is on the cytoplasmic side. The helical transmembrane segment at 533 to 553 (ATLIAGIFSFGSIAVELYFIY) threads the bilayer. At 554–565 (SSLWFNKIFYMF) the chain is on the extracellular side. A helical membrane pass occupies residues 566 to 586 (GFLLFSFLLLTLTTSLVTILI). The Cytoplasmic segment spans residues 587–601 (TYYSLCLENWLWQWR). A helical transmembrane segment spans residues 602 to 622 (SFIIGGLGCSIYTFIHSILFT). At 623-628 (KFKLGG) the chain is on the extracellular side. The helical transmembrane segment at 629–649 (VITVVLYLGYSLIISALCCVV) threads the bilayer. The Cytoplasmic segment spans residues 650–672 (TGAIGFFSSMFFIRKIYSAIKVE).

It belongs to the nonaspanin (TM9SF) (TC 9.A.2) family.

It is found in the vacuole membrane. Its function is as follows. With EMP70 and TMN3, plays a critical role in the late stages of a nutrient-controlled pathway notably regulating FLO11 gene expression. Acts downstream of RAS2 and TOR. Essential for cell adhesion and filamentous growth. May play a role as effector of cellular copper homeostasis. This chain is Transmembrane 9 superfamily member 2 (TMN2), found in Saccharomyces cerevisiae (strain ATCC 204508 / S288c) (Baker's yeast).